The sequence spans 533 residues: Retinoic acid receptor RXR-beta (533 aa).

The segment at 1–24 (MSWAARPPFLPQRHAAGQCGPVGV) is disordered. The segment at 1–204 (MSWAARPPFL…PGGPGAGKRL (204 aa)) is modulating. Residue R25 is modified to Omega-N-methylarginine. Residues 37–183 (RRRRPWLDPA…GPPEDVKPPV (147 aa)) are disordered. Low complexity predominate over residues 46 to 61 (AAAAAAAAAAGEQQTP). Residues 67–82 (EAGRDGMGDSGRDSRS) show a composition bias toward basic and acidic residues. Residues 83–94 (PDSSSPNPLSQG) are compositionally biased toward low complexity. Composition is skewed to pro residues over residues 95-109 (APPP…PPSS) and 118-129 (APPPPPMPPPQL). Over residues 130–143 (GSPFPVISSSMGSP) the composition is skewed to low complexity. The segment covering 144-153 (GLPPPAPPGF) has biased composition (pro residues). 2 consecutive NR C4-type zinc fingers follow at residues 205–225 (CAIC…CEGC) and 241–265 (CRDN…YQKC). A DNA-binding region (nuclear receptor) is located at residues 205 to 270 (CAICGDRSSG…RYQKCLATGM (66 aa)). A hinge region spans residues 271–295 (KREAVQEERQRGKDKDGDGEGAGGA). Residues 276-288 (QEERQRGKDKDGD) are compositionally biased toward basic and acidic residues. Disordered stretches follow at residues 276 to 299 (QEER…PEEM) and 313 to 336 (QKSD…NDPV). Residues 296–529 (PEEMPVDRIL…TFLMEMLEAP (234 aa)) enclose the NR LBD domain. Residues 320-329 (EGPGGTGGSG) are compositionally biased toward gly residues.

Belongs to the nuclear hormone receptor family. NR2 subfamily. As to quaternary structure, homodimer (in vitro). Heterodimer with other retinoic acid receptor family members. Binds DNA preferentially as a RAR/RXR heterodimer. Interacts with NR1H3. Interacts with AKAP13.

The protein localises to the nucleus. Its subcellular location is the cytoplasm. In terms of biological role, receptor for retinoic acid. Retinoic acid receptors bind as heterodimers to their target response elements in response to their ligands, all-trans or 9-cis retinoic acid, and regulate gene expression in various biological processes. The RAR/RXR heterodimers bind to the retinoic acid response elements (RARE). In Canis lupus familiaris (Dog), this protein is Retinoic acid receptor RXR-beta (RXRB).